The primary structure comprises 103 residues: UPF0145 protein pXO2-45/BXB0052/GBAA_pXO2_0052 (103 aa).

The protein belongs to the UPF0145 family.

In Bacillus anthracis, this protein is UPF0145 protein pXO2-45/BXB0052/GBAA_pXO2_0052.